The chain runs to 691 residues: Threonine--tRNA ligase (691 aa).

The disordered stretch occupies residues 1–22; that stretch reads MSVPAQPAPGADGGDPRQPIRV. Positions 1–73 constitute a TGS domain; the sequence is MSVPAQPAPG…DADAEVTPIA (73 aa). Residues 268-574 form a catalytic region; it reads DHRKLGVELD…LTEHYAGAFP (307 aa). C373, H424, and H551 together coordinate Zn(2+).

This sequence belongs to the class-II aminoacyl-tRNA synthetase family. As to quaternary structure, homodimer. It depends on Zn(2+) as a cofactor.

It localises to the cytoplasm. It catalyses the reaction tRNA(Thr) + L-threonine + ATP = L-threonyl-tRNA(Thr) + AMP + diphosphate + H(+). In terms of biological role, catalyzes the attachment of threonine to tRNA(Thr) in a two-step reaction: L-threonine is first activated by ATP to form Thr-AMP and then transferred to the acceptor end of tRNA(Thr). Also edits incorrectly charged L-seryl-tRNA(Thr). This Mycobacterium marinum (strain ATCC BAA-535 / M) protein is Threonine--tRNA ligase.